Reading from the N-terminus, the 288-residue chain is Energy-coupling factor transporter ATP-binding protein EcfA2 (288 aa).

The region spanning 2–244 (IKFEKVNYTY…VDFLKAHELG (243 aa)) is the ABC transporter domain. 39-46 (GHTGSGKS) is an ATP binding site.

This sequence belongs to the ABC transporter superfamily. Energy-coupling factor EcfA family. Forms a stable energy-coupling factor (ECF) transporter complex composed of 2 membrane-embedded substrate-binding proteins (S component), 2 ATP-binding proteins (A component) and 2 transmembrane proteins (T component).

The protein localises to the cell membrane. ATP-binding (A) component of a common energy-coupling factor (ECF) ABC-transporter complex. Unlike classic ABC transporters this ECF transporter provides the energy necessary to transport a number of different substrates. The polypeptide is Energy-coupling factor transporter ATP-binding protein EcfA2 (Lactococcus lactis subsp. lactis (strain IL1403) (Streptococcus lactis)).